We begin with the raw amino-acid sequence, 446 residues long: tRNA modification GTPase MnmE (446 aa).

(6S)-5-formyl-5,6,7,8-tetrahydrofolate contacts are provided by Arg-21, Glu-77, and Lys-116. In terms of domain architecture, TrmE-type G spans 212–370; that stretch reads GFRIALIGAP…LRAALASHVA (159 aa). Asn-222 contacts K(+). GTP is bound by residues 222 to 227, 241 to 247, and 266 to 269; these read NAGKST, TDVAGTT, and DTAG. Ser-226 contributes to the Mg(2+) binding site. 3 residues coordinate K(+): Thr-241, Val-243, and Thr-246. Thr-247 provides a ligand contact to Mg(2+). Position 446 (Lys-446) interacts with (6S)-5-formyl-5,6,7,8-tetrahydrofolate.

The protein belongs to the TRAFAC class TrmE-Era-EngA-EngB-Septin-like GTPase superfamily. TrmE GTPase family. As to quaternary structure, homodimer. Heterotetramer of two MnmE and two MnmG subunits. K(+) is required as a cofactor.

It localises to the cytoplasm. Exhibits a very high intrinsic GTPase hydrolysis rate. Involved in the addition of a carboxymethylaminomethyl (cmnm) group at the wobble position (U34) of certain tRNAs, forming tRNA-cmnm(5)s(2)U34. This Caulobacter vibrioides (strain ATCC 19089 / CIP 103742 / CB 15) (Caulobacter crescentus) protein is tRNA modification GTPase MnmE.